The following is a 284-amino-acid chain: Phosphoribosylaminoimidazole-succinocarboxamide synthase (284 aa).

This sequence belongs to the SAICAR synthetase family.

The catalysed reaction is 5-amino-1-(5-phospho-D-ribosyl)imidazole-4-carboxylate + L-aspartate + ATP = (2S)-2-[5-amino-1-(5-phospho-beta-D-ribosyl)imidazole-4-carboxamido]succinate + ADP + phosphate + 2 H(+). The protein operates within purine metabolism; IMP biosynthesis via de novo pathway; 5-amino-1-(5-phospho-D-ribosyl)imidazole-4-carboxamide from 5-amino-1-(5-phospho-D-ribosyl)imidazole-4-carboxylate: step 1/2. This is Phosphoribosylaminoimidazole-succinocarboxamide synthase from Chromobacterium violaceum (strain ATCC 12472 / DSM 30191 / JCM 1249 / CCUG 213 / NBRC 12614 / NCIMB 9131 / NCTC 9757 / MK).